We begin with the raw amino-acid sequence, 330 residues long: D-lactate dehydrogenase (330 aa).

NAD(+) contacts are provided by residues 156 to 157 (RI), Asp176, 206 to 207 (VP), 233 to 235 (AAR), and Asp259. The active site involves Arg235. Residue Glu264 is part of the active site. His296 (proton donor) is an active-site residue.

It belongs to the D-isomer specific 2-hydroxyacid dehydrogenase family.

The enzyme catalyses (R)-lactate + NAD(+) = pyruvate + NADH + H(+). The polypeptide is D-lactate dehydrogenase (ldhD) (Staphylococcus aureus).